A 277-amino-acid chain; its full sequence is 4-hydroxy-tetrahydrodipicolinate reductase (277 aa).

Residues 11 to 16 (GALGRM) and 110 to 112 (GTT) each bind NAD(+). His-166 functions as the Proton donor/acceptor in the catalytic mechanism. His-167 is a binding site for (S)-2,3,4,5-tetrahydrodipicolinate. The active-site Proton donor is Lys-170. 176–177 (GT) contributes to the (S)-2,3,4,5-tetrahydrodipicolinate binding site.

Belongs to the DapB family.

It is found in the cytoplasm. The catalysed reaction is (S)-2,3,4,5-tetrahydrodipicolinate + NAD(+) + H2O = (2S,4S)-4-hydroxy-2,3,4,5-tetrahydrodipicolinate + NADH + H(+). It catalyses the reaction (S)-2,3,4,5-tetrahydrodipicolinate + NADP(+) + H2O = (2S,4S)-4-hydroxy-2,3,4,5-tetrahydrodipicolinate + NADPH + H(+). Its pathway is amino-acid biosynthesis; L-lysine biosynthesis via DAP pathway; (S)-tetrahydrodipicolinate from L-aspartate: step 4/4. Functionally, catalyzes the conversion of 4-hydroxy-tetrahydrodipicolinate (HTPA) to tetrahydrodipicolinate. This Parasynechococcus marenigrum (strain WH8102) protein is 4-hydroxy-tetrahydrodipicolinate reductase.